Here is a 78-residue protein sequence, read N- to C-terminus: Large ribosomal subunit protein bL28 (78 aa).

The disordered stretch occupies residues 1–29 (MSAHCQVTGRQPSFGKSVSHSHRRTSRRW).

The protein belongs to the bacterial ribosomal protein bL28 family.

This chain is Large ribosomal subunit protein bL28, found in Corynebacterium efficiens (strain DSM 44549 / YS-314 / AJ 12310 / JCM 11189 / NBRC 100395).